A 255-amino-acid polypeptide reads, in one-letter code: tRNA (guanine-N(1)-)-methyltransferase (255 aa).

S-adenosyl-L-methionine is bound by residues G113 and 133–138 (IGDYVL).

It belongs to the RNA methyltransferase TrmD family. As to quaternary structure, homodimer.

The protein localises to the cytoplasm. The enzyme catalyses guanosine(37) in tRNA + S-adenosyl-L-methionine = N(1)-methylguanosine(37) in tRNA + S-adenosyl-L-homocysteine + H(+). In terms of biological role, specifically methylates guanosine-37 in various tRNAs. This chain is tRNA (guanine-N(1)-)-methyltransferase, found in Enterobacter sp. (strain 638).